Consider the following 230-residue polypeptide: Translation initiation factor IF-3 (230 aa).

2 disordered regions span residues 1–21 (MAIQ…RTNR) and 184–230 (LQSQ…AAQR). Over residues 193 to 208 (AAAAAAPAAAPAAGAP) the composition is skewed to low complexity. A compositionally biased stretch (pro residues) spans 209-220 (APAPAPAAPAPA). Over residues 221–230 (PTAADPAAQR) the composition is skewed to low complexity.

This sequence belongs to the IF-3 family. Monomer.

The protein resides in the cytoplasm. Functionally, IF-3 binds to the 30S ribosomal subunit and shifts the equilibrium between 70S ribosomes and their 50S and 30S subunits in favor of the free subunits, thus enhancing the availability of 30S subunits on which protein synthesis initiation begins. The chain is Translation initiation factor IF-3 from Anaeromyxobacter dehalogenans (strain 2CP-1 / ATCC BAA-258).